We begin with the raw amino-acid sequence, 236 residues long: UPF0177 protein YaiH (236 aa).

6 helical membrane-spanning segments follow: residues 16-36, 51-71, 90-110, 131-151, 180-200, and 210-230; these read YFSL…ILGY, ATAT…GILI, ILFL…TFTY, IVFP…FEEA, TGAN…TLIY, and ILVH…LQTI.

The protein belongs to the UPF0177 family.

It localises to the cell membrane. This chain is UPF0177 protein YaiH (yaiH), found in Lactococcus lactis subsp. lactis (strain IL1403) (Streptococcus lactis).